A 646-amino-acid chain; its full sequence is Phosphomethylpyrimidine synthase (646 aa).

Residues Asn235, Met264, Tyr293, His329, 349 to 351 (SRG), 390 to 393 (DGLR), and Glu429 each bind substrate. Residue His433 coordinates Zn(2+). A substrate-binding site is contributed by Tyr456. Residue His497 coordinates Zn(2+). [4Fe-4S] cluster is bound by residues Cys577, Cys580, and Cys585. The interval 624–646 (KSEEFRATGSELYHPAVHAEADE) is disordered.

This sequence belongs to the ThiC family. In terms of assembly, homodimer. [4Fe-4S] cluster is required as a cofactor.

It catalyses the reaction 5-amino-1-(5-phospho-beta-D-ribosyl)imidazole + S-adenosyl-L-methionine = 4-amino-2-methyl-5-(phosphooxymethyl)pyrimidine + CO + 5'-deoxyadenosine + formate + L-methionine + 3 H(+). It participates in cofactor biosynthesis; thiamine diphosphate biosynthesis. In terms of biological role, catalyzes the synthesis of the hydroxymethylpyrimidine phosphate (HMP-P) moiety of thiamine from aminoimidazole ribotide (AIR) in a radical S-adenosyl-L-methionine (SAM)-dependent reaction. The protein is Phosphomethylpyrimidine synthase of Vibrio parahaemolyticus serotype O3:K6 (strain RIMD 2210633).